Reading from the N-terminus, the 484-residue chain is uncharacterized protein (484 aa).

Positions 47-226 (TLPIPAAVVK…TEVTVKIFKF (180 aa)) constitute an FAD-binding PCMH-type domain.

The protein belongs to the FAD-binding oxidoreductase/transferase type 4 family.

This is an uncharacterized protein from Escherichia coli O157:H7.